The sequence spans 44 residues: DNA-directed RNA polymerase subunit Rpo12 (44 aa).

The Zn(2+) site is built by cysteine 8, cysteine 22, and cysteine 25.

The protein belongs to the archaeal Rpo12/eukaryotic RPC10 RNA polymerase subunit family. Part of the RNA polymerase complex. Zn(2+) serves as cofactor.

It localises to the cytoplasm. It carries out the reaction RNA(n) + a ribonucleoside 5'-triphosphate = RNA(n+1) + diphosphate. In terms of biological role, DNA-dependent RNA polymerase (RNAP) catalyzes the transcription of DNA into RNA using the four ribonucleoside triphosphates as substrates. In Haloquadratum walsbyi (strain DSM 16790 / HBSQ001), this protein is DNA-directed RNA polymerase subunit Rpo12.